A 697-amino-acid chain; its full sequence is Elongation factor G 2 (697 aa).

The region spanning 5–280 is the tr-type G domain; the sequence is SLYRNIGIFA…AVVDYLPSPT (276 aa). Residues 14-21, 78-82, and 132-135 contribute to the GTP site; these read AHVDAGKT, DTPGH, and NKLD.

Belongs to the TRAFAC class translation factor GTPase superfamily. Classic translation factor GTPase family. EF-G/EF-2 subfamily.

The protein localises to the cytoplasm. Functionally, catalyzes the GTP-dependent ribosomal translocation step during translation elongation. During this step, the ribosome changes from the pre-translocational (PRE) to the post-translocational (POST) state as the newly formed A-site-bound peptidyl-tRNA and P-site-bound deacylated tRNA move to the P and E sites, respectively. Catalyzes the coordinated movement of the two tRNA molecules, the mRNA and conformational changes in the ribosome. This chain is Elongation factor G 2, found in Saccharophagus degradans (strain 2-40 / ATCC 43961 / DSM 17024).